The following is a 280-amino-acid chain: Diaminopimelate epimerase (280 aa).

Substrate-binding residues include asparagine 13 and asparagine 66. The active-site Proton donor is cysteine 75. Substrate is bound by residues 76-77 (GN), asparagine 162, asparagine 195, and 213-214 (ER). The Proton acceptor role is filled by cysteine 222. Position 223–224 (223–224 (GT)) interacts with substrate.

The protein belongs to the diaminopimelate epimerase family. As to quaternary structure, homodimer.

It is found in the cytoplasm. The catalysed reaction is (2S,6S)-2,6-diaminopimelate = meso-2,6-diaminopimelate. It functions in the pathway amino-acid biosynthesis; L-lysine biosynthesis via DAP pathway; DL-2,6-diaminopimelate from LL-2,6-diaminopimelate: step 1/1. Its function is as follows. Catalyzes the stereoinversion of LL-2,6-diaminopimelate (L,L-DAP) to meso-diaminopimelate (meso-DAP), a precursor of L-lysine and an essential component of the bacterial peptidoglycan. The polypeptide is Diaminopimelate epimerase (Synechococcus elongatus (strain ATCC 33912 / PCC 7942 / FACHB-805) (Anacystis nidulans R2)).